Consider the following 388-residue polypeptide: Single-stranded DNA-binding protein 3 (388 aa).

Position 1 is an N-acetylmethionine (methionine 1). A LisH domain is found at 16-48 (AREKLALYVYEYLLHVGAQKSAQTFLSEIRWEK). The tract at residues 101-388 (VLGNIPPNDG…NYSPSMTMSV (288 aa)) is disordered. The span at 126-139 (GSQPSPHAQPPPHN) shows a compositional bias: pro residues. 3 positions are modified to asymmetric dimethylarginine: arginine 155, arginine 161, and arginine 165. 2 stretches are compositionally biased toward low complexity: residues 200–209 (MQRMNPPRGM) and 250–268 (PNSA…TYVG). Over residues 272 to 282 (GGGPPGTPIMP) the composition is skewed to pro residues. A compositionally biased stretch (polar residues) spans 285-296 (ADSTNSSDNIYT). The segment covering 315–325 (GSDGPMGGMGG) has biased composition (gly residues). Low complexity predominate over residues 346–357 (NSPNNISGISNP). 3 positions are modified to phosphoserine: serine 347, serine 352, and serine 355. Residue threonine 360 is modified to Phosphothreonine. Over residues 373-388 (HSFQNDNYSPSMTMSV) the composition is skewed to polar residues. Serine 381 and serine 387 each carry phosphoserine.

Highly expressed in all hematopoietic tissues, including spleen, lymph node, peripheral blood, bone marrow, thymus, and fetal liver, with highest expression in thymus and fetal liver. Expression is also high in heart, brain, kidney, and skeletal muscle.

It localises to the nucleus. May be involved in transcription regulation of the alpha 2(I) collagen gene where it binds to the single-stranded polypyrimidine sequences in the promoter region. The polypeptide is Single-stranded DNA-binding protein 3 (SSBP3) (Homo sapiens (Human)).